A 62-amino-acid polypeptide reads, in one-letter code: Small ribosomal subunit protein bS21 (62 aa).

The disordered stretch occupies residues 43–62; the sequence is EKRKRKAMALQKQRKRRSRY. Over residues 44–62 the composition is skewed to basic residues; that stretch reads KRKRKAMALQKQRKRRSRY.

Belongs to the bacterial ribosomal protein bS21 family.

This chain is Small ribosomal subunit protein bS21, found in Trichodesmium erythraeum (strain IMS101).